We begin with the raw amino-acid sequence, 581 residues long: Proline--tRNA ligase (581 aa).

Belongs to the class-II aminoacyl-tRNA synthetase family. ProS type 1 subfamily. Homodimer.

The protein resides in the cytoplasm. The catalysed reaction is tRNA(Pro) + L-proline + ATP = L-prolyl-tRNA(Pro) + AMP + diphosphate. In terms of biological role, catalyzes the attachment of proline to tRNA(Pro) in a two-step reaction: proline is first activated by ATP to form Pro-AMP and then transferred to the acceptor end of tRNA(Pro). As ProRS can inadvertently accommodate and process non-cognate amino acids such as alanine and cysteine, to avoid such errors it has two additional distinct editing activities against alanine. One activity is designated as 'pretransfer' editing and involves the tRNA(Pro)-independent hydrolysis of activated Ala-AMP. The other activity is designated 'posttransfer' editing and involves deacylation of mischarged Ala-tRNA(Pro). The misacylated Cys-tRNA(Pro) is not edited by ProRS. This Delftia acidovorans (strain DSM 14801 / SPH-1) protein is Proline--tRNA ligase.